The primary structure comprises 160 residues: Protein shisa-like-2B (160 aa).

The chain crosses the membrane as a helical span at residues 65 to 85 (IGALIGLGIAALVLLAFVISV).

It belongs to the shisa family.

It localises to the membrane. The sequence is that of Protein shisa-like-2B from Homo sapiens (Human).